The sequence spans 152 residues: Coiled-coil domain-containing protein 182 (152 aa).

Residues 46–109 are a coiled coil; the sequence is ADLEILQQKV…RLREEEDRGI (64 aa).

This chain is Coiled-coil domain-containing protein 182 (Ccdc182), found in Mus musculus (Mouse).